Reading from the N-terminus, the 247-residue chain is 6-phosphogluconolactonase (247 aa).

The protein belongs to the glucosamine/galactosamine-6-phosphate isomerase family. 6-phosphogluconolactonase subfamily.

It catalyses the reaction 6-phospho-D-glucono-1,5-lactone + H2O = 6-phospho-D-gluconate + H(+). Its pathway is carbohydrate degradation; pentose phosphate pathway; D-ribulose 5-phosphate from D-glucose 6-phosphate (oxidative stage): step 2/3. In terms of biological role, hydrolysis of 6-phosphogluconolactone to 6-phosphogluconate. The chain is 6-phosphogluconolactonase (pgl) from Mycobacterium bovis (strain ATCC BAA-935 / AF2122/97).